Here is a 409-residue protein sequence, read N- to C-terminus: Argininosuccinate synthase (409 aa).

Residues 11–19 (AYSGGLDTS) and Ala38 contribute to the ATP site. Residues Tyr91 and Ser96 each contribute to the L-citrulline site. Gly121 contacts ATP. Thr123, Asn127, and Asp128 together coordinate L-aspartate. L-citrulline is bound at residue Asn127. L-citrulline contacts are provided by Arg131, Ser182, Ser191, Glu267, and Tyr279.

This sequence belongs to the argininosuccinate synthase family. Type 1 subfamily. In terms of assembly, homotetramer.

The protein resides in the cytoplasm. It carries out the reaction L-citrulline + L-aspartate + ATP = 2-(N(omega)-L-arginino)succinate + AMP + diphosphate + H(+). The protein operates within amino-acid biosynthesis; L-arginine biosynthesis; L-arginine from L-ornithine and carbamoyl phosphate: step 2/3. The polypeptide is Argininosuccinate synthase (Nitrobacter hamburgensis (strain DSM 10229 / NCIMB 13809 / X14)).